The primary structure comprises 216 residues: Phosphatidylserine decarboxylase proenzyme (216 aa).

The active-site Schiff-base intermediate with substrate; via pyruvic acid is serine 183. Residue serine 183 is modified to Pyruvic acid (Ser); by autocatalysis.

It belongs to the phosphatidylserine decarboxylase family. PSD-A subfamily. Heterodimer of a large membrane-associated beta subunit and a small pyruvoyl-containing alpha subunit. Pyruvate serves as cofactor. In terms of processing, is synthesized initially as an inactive proenzyme. Formation of the active enzyme involves a self-maturation process in which the active site pyruvoyl group is generated from an internal serine residue via an autocatalytic post-translational modification. Two non-identical subunits are generated from the proenzyme in this reaction, and the pyruvate is formed at the N-terminus of the alpha chain, which is derived from the carboxyl end of the proenzyme. The post-translation cleavage follows an unusual pathway, termed non-hydrolytic serinolysis, in which the side chain hydroxyl group of the serine supplies its oxygen atom to form the C-terminus of the beta chain, while the remainder of the serine residue undergoes an oxidative deamination to produce ammonia and the pyruvoyl prosthetic group on the alpha chain.

It localises to the cell membrane. It carries out the reaction a 1,2-diacyl-sn-glycero-3-phospho-L-serine + H(+) = a 1,2-diacyl-sn-glycero-3-phosphoethanolamine + CO2. Its pathway is phospholipid metabolism; phosphatidylethanolamine biosynthesis; phosphatidylethanolamine from CDP-diacylglycerol: step 2/2. In terms of biological role, catalyzes the formation of phosphatidylethanolamine (PtdEtn) from phosphatidylserine (PtdSer). The sequence is that of Phosphatidylserine decarboxylase proenzyme from Chlorobaculum tepidum (strain ATCC 49652 / DSM 12025 / NBRC 103806 / TLS) (Chlorobium tepidum).